Reading from the N-terminus, the 106-residue chain is Nucleoid-associated protein BBta_7345 (106 aa).

This sequence belongs to the YbaB/EbfC family. In terms of assembly, homodimer.

It localises to the cytoplasm. The protein localises to the nucleoid. Binds to DNA and alters its conformation. May be involved in regulation of gene expression, nucleoid organization and DNA protection. In Bradyrhizobium sp. (strain BTAi1 / ATCC BAA-1182), this protein is Nucleoid-associated protein BBta_7345.